Consider the following 55-residue polypeptide: DQGRDANCNYEFPGCPRNLEPVCGTDGNTYNNECLLCMENKKRDVPIRIQKDGPC.

A Kazal-like domain is found at 2–55; that stretch reads QGRDANCNYEFPGCPRNLEPVCGTDGNTYNNECLLCMENKKRDVPIRIQKDGPC. 3 disulfide bridges follow: C8-C37, C15-C34, and C23-C55.

The protein resides in the secreted. Serine protease inhibitor which exhibits anti-trypsin activity. In the pancreas, protects against trypsin-catalyzed premature activation of zymogens. Functionally, in the male reproductive tract, binds to sperm heads where it modulates sperm capacitance by inhibiting calcium uptake and nitrogen oxide (NO) production. This Monodelphis domestica (Gray short-tailed opossum) protein is Serine protease inhibitor Kazal-type 1 (SPINK1).